Consider the following 209-residue polypeptide: MNNLDLSLYLVTNNSEDEEKFLNIIEESLKGGVSVVQLREKKAETLDFYNLALKVKEITQKYNVPLIINDRIDIALAIDADGVHVGQSDMPAKTARSMIGEDKILGVSAANIKEAKKAQRESADYIGVGAVYPTNTKDDATSVPKKELKEIVKSVDIPVVAIGGITQENAHELNDCGIDGLSVVSAIMEAKNPKIASENLLKEFKAKNS.

4-amino-2-methyl-5-(diphosphooxymethyl)pyrimidine is bound by residues Gln-37–Lys-41 and Asn-69. Mg(2+) is bound by residues Asp-70 and Asp-89. Ser-108 contacts 4-amino-2-methyl-5-(diphosphooxymethyl)pyrimidine. Thr-134 to Thr-136 is a 2-[(2R,5Z)-2-carboxy-4-methylthiazol-5(2H)-ylidene]ethyl phosphate binding site. Residue Lys-137 coordinates 4-amino-2-methyl-5-(diphosphooxymethyl)pyrimidine. Residues Gly-164 and Val-184 to Ser-185 each bind 2-[(2R,5Z)-2-carboxy-4-methylthiazol-5(2H)-ylidene]ethyl phosphate.

The protein belongs to the thiamine-phosphate synthase family. Requires Mg(2+) as cofactor.

The catalysed reaction is 2-[(2R,5Z)-2-carboxy-4-methylthiazol-5(2H)-ylidene]ethyl phosphate + 4-amino-2-methyl-5-(diphosphooxymethyl)pyrimidine + 2 H(+) = thiamine phosphate + CO2 + diphosphate. The enzyme catalyses 2-(2-carboxy-4-methylthiazol-5-yl)ethyl phosphate + 4-amino-2-methyl-5-(diphosphooxymethyl)pyrimidine + 2 H(+) = thiamine phosphate + CO2 + diphosphate. It catalyses the reaction 4-methyl-5-(2-phosphooxyethyl)-thiazole + 4-amino-2-methyl-5-(diphosphooxymethyl)pyrimidine + H(+) = thiamine phosphate + diphosphate. It participates in cofactor biosynthesis; thiamine diphosphate biosynthesis; thiamine phosphate from 4-amino-2-methyl-5-diphosphomethylpyrimidine and 4-methyl-5-(2-phosphoethyl)-thiazole: step 1/1. Functionally, condenses 4-methyl-5-(beta-hydroxyethyl)thiazole monophosphate (THZ-P) and 2-methyl-4-amino-5-hydroxymethyl pyrimidine pyrophosphate (HMP-PP) to form thiamine monophosphate (TMP). This Methanobrevibacter smithii (strain ATCC 35061 / DSM 861 / OCM 144 / PS) protein is Thiamine-phosphate synthase.